A 217-amino-acid chain; its full sequence is GTP cyclohydrolase 1 (217 aa).

The Zn(2+) site is built by Cys-109, His-112, and Cys-180.

Belongs to the GTP cyclohydrolase I family. Toroid-shaped homodecamer, composed of two pentamers of five dimers.

It catalyses the reaction GTP + H2O = 7,8-dihydroneopterin 3'-triphosphate + formate + H(+). The protein operates within cofactor biosynthesis; 7,8-dihydroneopterin triphosphate biosynthesis; 7,8-dihydroneopterin triphosphate from GTP: step 1/1. The polypeptide is GTP cyclohydrolase 1 (Vibrio campbellii (strain ATCC BAA-1116)).